The sequence spans 313 residues: MTHVPVLYTQAMEGLRVVENGTYLDGTFGRGGHARGVLQQLGPGGRLLVMDKDPEAIAMAERVFSCDPRVVIRHGSFALLAQLAAPQSLDGVLFDLGVSSPQLDVPERGFSFAKDGPLDMRMDPEMGESAAQWLARVSEREIAEVLWTYGEEKQSRRIARAIVAYRANQPLLRTVQLAELIASVMLRTKSGACKSRIHPATRSFQGIRIHVNRELVDLEVGLEAALAALRPGGRLVVISFHSLEDRIVKQFISRHAKVPPTNRRLPEVQTFVPLLRMIGRAIKADEDELEVNPRARSAVLRVAEKLDVLEAVR.

Residues Gly-31–His-33, Asp-51, Phe-77, Asp-95, and Gln-102 each bind S-adenosyl-L-methionine.

This sequence belongs to the methyltransferase superfamily. RsmH family.

The protein resides in the cytoplasm. It carries out the reaction cytidine(1402) in 16S rRNA + S-adenosyl-L-methionine = N(4)-methylcytidine(1402) in 16S rRNA + S-adenosyl-L-homocysteine + H(+). In terms of biological role, specifically methylates the N4 position of cytidine in position 1402 (C1402) of 16S rRNA. The sequence is that of Ribosomal RNA small subunit methyltransferase H from Xylella fastidiosa (strain M12).